We begin with the raw amino-acid sequence, 166 residues long: Ribosome maturation factor RimM (166 aa).

The PRC barrel domain occupies 94-166; sequence EGEYYHADLI…IVIEAAYADQ (73 aa).

Belongs to the RimM family. As to quaternary structure, binds ribosomal protein uS19.

It is found in the cytoplasm. An accessory protein needed during the final step in the assembly of 30S ribosomal subunit, possibly for assembly of the head region. Essential for efficient processing of 16S rRNA. May be needed both before and after RbfA during the maturation of 16S rRNA. It has affinity for free ribosomal 30S subunits but not for 70S ribosomes. In Novosphingobium aromaticivorans (strain ATCC 700278 / DSM 12444 / CCUG 56034 / CIP 105152 / NBRC 16084 / F199), this protein is Ribosome maturation factor RimM.